The chain runs to 446 residues: Dual specificity mitogen-activated protein kinase kinase 2 (446 aa).

Low complexity predominate over residues 27 to 42 (SSGSSAGLGFQGQSQQ). The tract at residues 27–51 (SSGSSAGLGFQGQSQQHSTVNSMQG) is disordered. The region spanning 149-414 (LKDLGEIGRG…YKELLKHPFI (266 aa)) is the Protein kinase domain. Residues 155–163 (IGRGAYGSV) and lysine 178 contribute to the ATP site. The active-site Proton acceptor is aspartate 276. Residue serine 304 is modified to Phosphoserine; by RAF. At threonine 308 the chain carries Phosphothreonine; by RAF.

This sequence belongs to the protein kinase superfamily. STE Ser/Thr protein kinase family. MAP kinase kinase subfamily. Post-translationally, MAPKK is itself dependent on Ser/Thr phosphorylation for activity catalyzed by MAP kinase kinase kinases. In terms of tissue distribution, expressed abundantly in the adult brain and muscle.

It carries out the reaction L-seryl-[protein] + ATP = O-phospho-L-seryl-[protein] + ADP + H(+). It catalyses the reaction L-threonyl-[protein] + ATP = O-phospho-L-threonyl-[protein] + ADP + H(+). The enzyme catalyses L-tyrosyl-[protein] + ATP = O-phospho-L-tyrosyl-[protein] + ADP + H(+). Catalyzes the concomitant phosphorylation of a threonine and a tyrosine residue in a Thr-Glu-Tyr sequence located in MAP kinases. The polypeptide is Dual specificity mitogen-activated protein kinase kinase 2 (map2k2) (Xenopus laevis (African clawed frog)).